The sequence spans 303 residues: Oxygen-dependent coproporphyrinogen-III oxidase (303 aa).

S93 serves as a coordination point for substrate. A divalent metal cation-binding residues include H97 and H107. The active-site Proton donor is the H107. 109–111 (NIR) is a substrate binding site. Positions 146 and 176 each coordinate a divalent metal cation. Residues 241-276 (YVEFNLLLDRGTLFGIQSNGRIESILSSMPPLVKWE) form an important for dimerization region.

It belongs to the aerobic coproporphyrinogen-III oxidase family. In terms of assembly, homodimer. It depends on a divalent metal cation as a cofactor.

The protein localises to the cytoplasm. It carries out the reaction coproporphyrinogen III + O2 + 2 H(+) = protoporphyrinogen IX + 2 CO2 + 2 H2O. The protein operates within porphyrin-containing compound metabolism; protoporphyrin-IX biosynthesis; protoporphyrinogen-IX from coproporphyrinogen-III (O2 route): step 1/1. Its function is as follows. Involved in the heme biosynthesis. Catalyzes the aerobic oxidative decarboxylation of propionate groups of rings A and B of coproporphyrinogen-III to yield the vinyl groups in protoporphyrinogen-IX. This Wigglesworthia glossinidia brevipalpis protein is Oxygen-dependent coproporphyrinogen-III oxidase.